Consider the following 74-residue polypeptide: Homeobox protein Hox-B8 (74 aa).

Residues 1–24 (YTDCKLAASGLGEEAESSEQSPSP) are compositionally biased toward low complexity. Residues 1 to 28 (YTDCKLAASGLGEEAESSEQSPSPTQLF) are disordered. Residues 27–32 (LFPWMR) carry the Antp-type hexapeptide motif. A DNA-binding region (homeobox) is located at residues 39 to 74 (RRRGRQTYSRYQTLELEKEFLFNPYLTRKRRIEVSR).

Belongs to the Antp homeobox family.

It is found in the nucleus. Its function is as follows. Sequence-specific transcription factor which is part of a developmental regulatory system that provides cells with specific positional identities on the anterior-posterior axis. In Gallus gallus (Chicken), this protein is Homeobox protein Hox-B8 (HOXB8).